The following is a 151-amino-acid chain: Aspartate carbamoyltransferase regulatory chain (151 aa).

Zn(2+)-binding residues include C108, C113, C138, and C141.

Belongs to the PyrI family. As to quaternary structure, contains catalytic and regulatory chains. Zn(2+) serves as cofactor.

Its function is as follows. Involved in allosteric regulation of aspartate carbamoyltransferase. This Pyrobaculum islandicum (strain DSM 4184 / JCM 9189 / GEO3) protein is Aspartate carbamoyltransferase regulatory chain.